A 250-amino-acid chain; its full sequence is 1-acyl-sn-glycerol-3-phosphate acyltransferase (250 aa).

The HXXXXD motif motif lies at 88-93; the sequence is HIAAMD.

Belongs to the 1-acyl-sn-glycerol-3-phosphate acyltransferase family.

The catalysed reaction is a 1-acyl-sn-glycero-3-phosphate + an acyl-CoA = a 1,2-diacyl-sn-glycero-3-phosphate + CoA. It participates in phospholipid metabolism; CDP-diacylglycerol biosynthesis; CDP-diacylglycerol from sn-glycerol 3-phosphate: step 2/3. Its function is as follows. Converts lysophosphatidic acid (LPA) into phosphatidic acid by incorporating acyl moiety at the 2 position. In Borreliella burgdorferi (strain ATCC 35210 / DSM 4680 / CIP 102532 / B31) (Borrelia burgdorferi), this protein is 1-acyl-sn-glycerol-3-phosphate acyltransferase (plsC).